The primary structure comprises 354 residues: Galactoside alpha-(1,2)-fucosyltransferase 2 (354 aa).

The Cytoplasmic portion of the chain corresponds to 1-5; the sequence is MASAQ. Residues 6 to 26 traverse the membrane as a helical; Signal-anchor for type II membrane protein segment; the sequence is VPFSFPLAHFLIFVFVTSTIT. Residues 27-354 are Lumenal-facing; it reads HLQQRIVKLQ…PADLSPLLKH (328 aa). Residues 43 to 68 form a disordered region; that stretch reads LPMTTQMSSGNTESPEMRRDSEQHGN. Positions 45–56 are enriched in polar residues; it reads MTTQMSSGNTES. The span at 57-68 shows a compositional bias: basic and acidic residues; it reads PEMRRDSEQHGN. Asn-199 carries an N-linked (GlcNAc...) asparagine glycan.

It belongs to the glycosyltransferase 11 family. Specifically expressed in gut.

Its subcellular location is the golgi apparatus. It localises to the golgi stack membrane. The enzyme catalyses a beta-D-galactosyl-(1-&gt;3)-N-acetyl-beta-D-glucosaminyl derivative + GDP-beta-L-fucose = an alpha-L-Fuc-(1-&gt;2)-beta-D-Gal-(1-&gt;3)-beta-D-GlcNAc derivative + GDP + H(+). The catalysed reaction is a beta-D-galactosyl-(1-&gt;4)-N-acetyl-beta-D-glucosaminyl derivative + GDP-beta-L-fucose = an alpha-L-Fuc-(1-&gt;2)-beta-D-Gal-(1-&gt;4)-beta-D-GlcNAc derivative + GDP + H(+). It catalyses the reaction a ganglioside GM1 (d18:1(4E)) + GDP-beta-L-fucose = a ganglioside Fuc-GM1 (d18:1(4E)) + GDP + H(+). It carries out the reaction a globoside GalGb4Cer (d18:1(4E)) + GDP-beta-L-fucose = a globoside Globo-H (d18:1(4E)) + GDP + H(+). The enzyme catalyses a neolactoside nLc4Cer + GDP-beta-L-fucose = a neolactoside IV(2)-alpha-Fuc-nLc4Cer + GDP + H(+). The catalysed reaction is a neolactoside nLc4Cer(d18:1(4E)) + GDP-beta-L-fucose = a neolactoside IV(2)-alpha-Fuc-nLc4Cer(d18:1(4E)) + GDP + H(+). It catalyses the reaction a ganglioside GM1 + GDP-beta-L-fucose = a ganglioside Fuc-GM1 + GDP + H(+). It carries out the reaction a ganglioside GA1 + GDP-beta-L-fucose = a ganglioside Fuc-GA1 + GDP + H(+). The enzyme catalyses Lc4Cer + GDP-beta-L-fucose = alpha-L-fucosyl-(1-&gt;2)-beta-D-galactosyl-(1-&gt;3)-N-acetyl-beta-D-glucosaminyl-(1-&gt;3)-beta-D-galactosyl-(1-&gt;4)-beta-D-glucosyl-(1&lt;-&gt;1')-ceramide + GDP + H(+). The catalysed reaction is a beta-D-Gal-(1-&gt;3)-beta-D-GlcNAc-(1-&gt;3)-beta-D-Gal-(1-&gt;4)-beta-D-Glc-(1&lt;-&gt;1')-Cer(d18:1(4E)) + GDP-beta-L-fucose = alpha-L-fucosyl-(1-&gt;2)- beta-D-galactosyl-(1-&gt;3)-N-acetyl-beta-D-glucosaminyl-(1-&gt;3)-beta-D-galactosyl-(1-&gt;4)-beta-D-glucosyl-(1&lt;-&gt;1')-N-acylsphing-4-enine + GDP + H(+). It catalyses the reaction a ganglioside GD1b + GDP-beta-L-fucose = a ganglioside Fuc-GD1b + GDP + H(+). It carries out the reaction a lactoside III(4)-a-Fuc-Lc4Cer + GDP-beta-L-fucose = a lactoside IV(2),III(4)-a-[Fuc]2-Lc4Cer + GDP + H(+). The enzyme catalyses beta-D-galactosyl-(1-&gt;3)-N-acetyl-D-galactosamine + GDP-beta-L-fucose = alpha-L-fucosyl-(1-&gt;2)-beta-D-galactosyl-(1-&gt;3)-N-acetyl-D-galactosamine + GDP + H(+). It participates in protein modification; protein glycosylation. Its function is as follows. Catalyzes the transfer of L-fucose, from a guanosine diphosphate-beta-L-fucose, to the terminal galactose on both O- and N-linked glycans chains of cell surface glycoproteins and glycolipids and the resulting epitope regulates several processes such as cell-cell interaction including host-microbe interaction, cell surface expression and cell proliferation. Preferentially fucosylates gangliosides GA1 and GM1 in the antrum, cecum and colon and in the female reproductive organs. Fucosylated host glycoproteins or glycolipids mediate interaction with intestinal microbiota influencing its composition. Creates a soluble precursor oligosaccharide FuC-alpha ((1,2)Galbeta-) called the H antigen which is an essential substrate for the final step in the soluble ABO blood group antigen synthesis pathway. The protein is Galactoside alpha-(1,2)-fucosyltransferase 2 of Rattus norvegicus (Rat).